Reading from the N-terminus, the 528-residue chain is Peptide chain release factor 3 (528 aa).

One can recognise a tr-type G domain in the interval 11 to 279 (EKRRTFAIIS…GLVEWAPKPL (269 aa)). Residues 20-27 (SHPDAGKT), 88-92 (DTPGH), and 142-145 (NKCD) each bind GTP.

It belongs to the TRAFAC class translation factor GTPase superfamily. Classic translation factor GTPase family. PrfC subfamily.

It localises to the cytoplasm. In terms of biological role, increases the formation of ribosomal termination complexes and stimulates activities of RF-1 and RF-2. It binds guanine nucleotides and has strong preference for UGA stop codons. It may interact directly with the ribosome. The stimulation of RF-1 and RF-2 is significantly reduced by GTP and GDP, but not by GMP. The chain is Peptide chain release factor 3 from Psychromonas ingrahamii (strain DSM 17664 / CCUG 51855 / 37).